We begin with the raw amino-acid sequence, 274 residues long: 3-methyl-2-oxobutanoate hydroxymethyltransferase (274 aa).

Residues D46 and D85 each coordinate Mg(2+). Residues 46–47, D85, and K115 contribute to the 3-methyl-2-oxobutanoate site; that span reads DS. E117 contributes to the Mg(2+) binding site. Catalysis depends on E184, which acts as the Proton acceptor.

This sequence belongs to the PanB family. In terms of assembly, homodecamer; pentamer of dimers. Requires Mg(2+) as cofactor.

It localises to the cytoplasm. The catalysed reaction is 3-methyl-2-oxobutanoate + (6R)-5,10-methylene-5,6,7,8-tetrahydrofolate + H2O = 2-dehydropantoate + (6S)-5,6,7,8-tetrahydrofolate. It participates in cofactor biosynthesis; coenzyme A biosynthesis. In terms of biological role, catalyzes the reversible reaction in which hydroxymethyl group from 5,10-methylenetetrahydrofolate is transferred onto alpha-ketoisovalerate to form ketopantoate. The protein is 3-methyl-2-oxobutanoate hydroxymethyltransferase of Halobacterium salinarum (strain ATCC 29341 / DSM 671 / R1).